The following is a 500-amino-acid chain: Probable cytosol aminopeptidase (500 aa).

2 residues coordinate Mn(2+): Lys-264 and Asp-269. The active site involves Lys-276. Residues Asp-287, Asp-346, and Glu-348 each coordinate Mn(2+). The active site involves Arg-350.

It belongs to the peptidase M17 family. Mn(2+) serves as cofactor.

The protein localises to the cytoplasm. It catalyses the reaction Release of an N-terminal amino acid, Xaa-|-Yaa-, in which Xaa is preferably Leu, but may be other amino acids including Pro although not Arg or Lys, and Yaa may be Pro. Amino acid amides and methyl esters are also readily hydrolyzed, but rates on arylamides are exceedingly low.. The catalysed reaction is Release of an N-terminal amino acid, preferentially leucine, but not glutamic or aspartic acids.. In terms of biological role, presumably involved in the processing and regular turnover of intracellular proteins. Catalyzes the removal of unsubstituted N-terminal amino acids from various peptides. The protein is Probable cytosol aminopeptidase of Afipia carboxidovorans (strain ATCC 49405 / DSM 1227 / KCTC 32145 / OM5) (Oligotropha carboxidovorans).